We begin with the raw amino-acid sequence, 729 residues long: Denticleless protein homolog (729 aa).

At Met1 the chain carries N-acetylmethionine. 3 WD repeats span residues 47-89 (GVPV…SKKT), 96-135 (AHWNAVFDLAWVPGELKLVTAAGDQTAKFWDVRAGELMGT), and 138-178 (GHQC…KDGF). The DDB1-binding motif signature appears at 168 to 171 (WDTR). Over residues 189 to 198 (HNTADKQTPS) the composition is skewed to polar residues. The segment at 189–212 (HNTADKQTPSKPKKKQNSKGLAPA) is disordered. A Phosphothreonine modification is found at Thr196. A Nuclear localization signal motif is present at residues 197–203 (PSKPKKK). WD repeat units lie at residues 214-253 (DSQQSVTVVLFQDENTLVSAGAVDGIIKVWDLRKNYTAYR), 269-308 (TRKLGYSSLVLDSTGSTLFANCTDDNIYMFNMTGLKTSPV), 313-354 (GHQN…HPPT), and 358-398 (GHSQ…EEKP). The DDB1-binding motif signature appears at 243 to 246 (WDLR). A phosphoserine mark is found at Ser409 and Ser425. Disordered stretches follow at residues 416 to 445 (KACPVTVPSSQSTPAKAPRAKSSPSISSPS) and 460 to 491 (PSSTPTFSVKTTPATTRSSVSRRGSISSVSPK). Residues 427–445 (STPAKAPRAKSSPSISSPS) are compositionally biased toward low complexity. Polar residues predominate over residues 460 to 475 (PSSTPTFSVKTTPATT). The residue at position 463 (Thr463) is a Phosphothreonine; by CDK1 and CDK2. Residues 476-491 (RSSVSRRGSISSVSPK) show a composition bias toward low complexity. Ser484, Ser489, Ser494, and Ser511 each carry phosphoserine. A disordered region spans residues 504-546 (VTRTPSSSPPVTPPASETKISSPRKALIPVSQKSSQADACSES). Thr515 is subject to Phosphothreonine. A Phosphoserine modification is found at Ser556. The segment covering 596–607 (VLSQDSEGPTKS) has biased composition (polar residues). The segment at 596–705 (VLSQDSEGPT…GPVTITPSSM (110 aa)) is disordered. 2 stretches are compositionally biased toward low complexity: residues 630–645 (EGCGPLPLPLRPCGEG) and 674–688 (SSPRSPSSQTPSSRR). Ser675 and Ser678 each carry phosphoserine. A phosphothreonine mark is found at Thr683 and Thr701.

Belongs to the WD repeat cdt2 family. In terms of assembly, component of the DCX(DTL) E3 ubiquitin ligase complex (also called CRL4(CDT2)), at least composed of CUL4 (CUL4A or CUL4B), DDB1, DTL/CDT2 and RBX1. Interacts with CDKN1A and DDB1. Interacts with FBXO11; SCF(FBXWO11) controls DTL stability but DCX(DTL) does not control FBXO11 stability. Interacts with CRY1. Ubiquitinated by the anaphase promoting complex/cyclosome (APC/C). Autoubiquitinated through 'Lys-48'-polyubiquitin chains in a PCNA-independent reaction, allowing proteasomal turnover. Polyubiquitinated by SCF(FBXO11) when not phosphorylated, leading to its degradation. A tight regulation of the polyubiquitination by SCF(FBXO11) is involved in the control of different processes such as TGF-beta signaling, cell cycle progression and exit. Post-translationally, phosphorylated at Thr-463 by CDK1/Cyclin B and CDK2/Cycnlin A but not by CDK2/Cyclin E, MAPK1 or PLK1. Phosphorylation at Thr-463 inhibits the interaction with FBXO11 and decreases upon cell cycle exit induced by TGF-beta or serum starvation.

It is found in the nucleus. The protein resides in the nucleus membrane. The protein localises to the cytoplasm. It localises to the cytoskeleton. Its subcellular location is the microtubule organizing center. It is found in the centrosome. The protein resides in the chromosome. Its pathway is protein modification; protein ubiquitination. In terms of biological role, substrate-specific adapter of a DCX (DDB1-CUL4-X-box) E3 ubiquitin-protein ligase complex required for cell cycle control, DNA damage response and translesion DNA synthesis. The DCX(DTL) complex, also named CRL4(CDT2) complex, mediates the polyubiquitination and subsequent degradation of CDT1, CDKN1A/p21(CIP1), FBH1, KMT5A and SDE2. CDT1 degradation in response to DNA damage is necessary to ensure proper cell cycle regulation of DNA replication. CDKN1A/p21(CIP1) degradation during S phase or following UV irradiation is essential to control replication licensing. KMT5A degradation is also important for a proper regulation of mechanisms such as TGF-beta signaling, cell cycle progression, DNA repair and cell migration. Most substrates require their interaction with PCNA for their polyubiquitination: substrates interact with PCNA via their PIP-box, and those containing the 'K+4' motif in the PIP box, recruit the DCX(DTL) complex, leading to their degradation. In undamaged proliferating cells, the DCX(DTL) complex also promotes the 'Lys-164' monoubiquitination of PCNA, thereby being involved in PCNA-dependent translesion DNA synthesis. The DDB1-CUL4A-DTL E3 ligase complex regulates the circadian clock function by mediating the ubiquitination and degradation of CRY1. The protein is Denticleless protein homolog (Dtl) of Mus musculus (Mouse).